A 1017-amino-acid chain; its full sequence is Formin-binding protein 4 (1017 aa).

Disordered regions lie at residues 1–141 and 160–202; these read MGKK…STDI and PAAP…TSGW. Ser18 is subject to Phosphoserine. The span at 40 to 69 shows a compositional bias: low complexity; the sequence is DSTAAVPSQPAPSAATTTTTAVTAAAASDD. Residues Ser116 and Ser124 each carry the phosphoserine modification. A compositionally biased stretch (polar residues) spans 130-141; that stretch reads SKETNGNQSTDI. Thr172 carries the phosphothreonine modification. Residues 181-200 show a composition bias toward low complexity; it reads AATSTLSSSTSNGTDSTQTS. The WW 1 domain maps to 214–248; sequence GIEMGDWQEVWDENTGCYYYWNTQTNEVTWELPQY. N6-acetyllysine is present on Lys290. Lys301 is covalently cross-linked (Glycyl lysine isopeptide (Lys-Gly) (interchain with G-Cter in SUMO1)). Lys335 is covalently cross-linked (Glycyl lysine isopeptide (Lys-Gly) (interchain with G-Cter in SUMO2)). A Glycyl lysine isopeptide (Lys-Gly) (interchain with G-Cter in SUMO1); alternate cross-link involves residue Lys348. A Glycyl lysine isopeptide (Lys-Gly) (interchain with G-Cter in SUMO2); alternate cross-link involves residue Lys348. 4 disordered regions span residues 421–519, 621–676, 706–792, and 899–994; these read LEEG…TTPK, ESQW…CKES, PLPL…IKRK, and TATI…AERN. A phosphoserine mark is found at Ser427, Ser432, Ser435, Ser438, and Ser442. Positions 428–442 are enriched in polar residues; it reads VSGSSPRSDISQPAS. The segment covering 449-458 has biased composition (basic residues); sequence LMSKRGKWKM. Low complexity predominate over residues 461 to 474; sequence RATSPESTSRSSSK. The residue at position 464 (Ser464) is a Phosphoserine. Thr479 carries the post-translational modification Phosphothreonine. A compositionally biased stretch (basic and acidic residues) spans 491–513; sequence NSEKIDENSDKEMEVEESPEKIK. 2 positions are modified to phosphoserine: Ser499 and Ser508. Phosphothreonine is present on residues Thr516 and Thr517. A Glycyl lysine isopeptide (Lys-Gly) (interchain with G-Cter in SUMO1); alternate cross-link involves residue Lys519. A Glycyl lysine isopeptide (Lys-Gly) (interchain with G-Cter in SUMO2); alternate cross-link involves residue Lys519. The WW 2 domain occupies 595-629; the sequence is NATPKGWSCHWDRDHRRYFYVNEQSGESQWEFPDG. The segment covering 627–637 has biased composition (acidic residues); it reads PDGEEEEEESQ. Residues 640-656 show a composition bias toward basic and acidic residues; it reads ENRDETLAKQTLKDKTG. A compositionally biased stretch (low complexity) spans 657–671; sequence TDSNSTESSETSTGS. The span at 706–732 shows a compositional bias: pro residues; the sequence is PLPLEMPPPPPPPPESPPPPPPPPPPA. Residues 733–748 show a composition bias toward acidic residues; it reads EDGEIQEVEMEDEGSE. Over residues 764–786 the composition is skewed to low complexity; it reads SAQTTVVTSQSSVDSTISSSSST. Positions 904–925 are enriched in pro residues; sequence EPPPPPPPPPPPPPPAPKMPPP. The span at 929–941 shows a compositional bias: basic residues; it reads KKGRKDKAKKSKT. Positions 957 to 970 are enriched in acidic residues; it reads LDEEDNSSSSEEDR. 3 positions are modified to phosphoserine: Ser963, Ser964, and Ser965. Residues 971-982 are compositionally biased toward basic and acidic residues; that stretch reads ESTAQKRIEEWK.

In terms of assembly, binds FMN1. Interacts with the Arg/Gly-rich-flanked Pro-rich of KHDRBS1/SAM68. Arginine methylation in these regions has no effect on this binding. Highly expressed in the eye.

The polypeptide is Formin-binding protein 4 (FNBP4) (Homo sapiens (Human)).